The primary structure comprises 259 residues: Expansin-B4 (259 aa).

The N-terminal stretch at 1-23 (MASSQRYFALLALFAVSLKFCYC) is a signal peptide. Asn-25 carries an N-linked (GlcNAc...) asparagine glycan. The 111-residue stretch at 51–161 (GGACGYGSAV…KRAACLYRGT (111 aa)) folds into the Expansin-like EG45 domain. 3 disulfide bridges follow: Cys-54–Cys-83, Cys-86–Cys-156, and Cys-91–Cys-97. The region spanning 174–255 (YYISFVVEYE…NWKPDESYRS (82 aa)) is the Expansin-like CBD domain.

The protein belongs to the expansin family. Expansin B subfamily.

It is found in the secreted. The protein resides in the cell wall. It localises to the membrane. May cause loosening and extension of plant cell walls by disrupting non-covalent bonding between cellulose microfibrils and matrix glucans. No enzymatic activity has been found. The protein is Expansin-B4 (EXPB4) of Arabidopsis thaliana (Mouse-ear cress).